The primary structure comprises 429 residues: Tol-Pal system protein TolB (429 aa).

The first 28 residues, 1–28 (MSITPSFSRRSVVSLLAAGAFSSMSAFA), serve as a signal peptide directing secretion.

Belongs to the TolB family. The Tol-Pal system is composed of five core proteins: the inner membrane proteins TolA, TolQ and TolR, the periplasmic protein TolB and the outer membrane protein Pal. They form a network linking the inner and outer membranes and the peptidoglycan layer.

It localises to the periplasm. Part of the Tol-Pal system, which plays a role in outer membrane invagination during cell division and is important for maintaining outer membrane integrity. The sequence is that of Tol-Pal system protein TolB from Polaromonas naphthalenivorans (strain CJ2).